The following is a 381-amino-acid chain: GDP-mannose-dependent alpha-(1-6)-phosphatidylinositol dimannoside mannosyltransferase (381 aa).

Substrate contacts are provided by residues Gly-16, Arg-207, 211–212, 283–287, and Glu-291; these read EK and ETFGL.

Belongs to the glycosyltransferase group 1 family. Glycosyltransferase 4 subfamily.

It participates in phospholipid metabolism; phosphatidylinositol metabolism. Functionally, catalyzes the addition of a mannose residue from GDP-D-mannose to the position 6 of the alpha-1,6-linked mannose residue of the triacyl phosphatidylinositol dimannoside (Ac3PIM2) to generate triacyl phosphatidylinositol trimannoside (Ac3PIM3). The sequence is that of GDP-mannose-dependent alpha-(1-6)-phosphatidylinositol dimannoside mannosyltransferase (pimC) from Mycobacterium tuberculosis (strain ATCC 25177 / H37Ra).